Consider the following 179-residue polypeptide: Large ribosomal subunit protein uL5 (179 aa).

It belongs to the universal ribosomal protein uL5 family. As to quaternary structure, part of the 50S ribosomal subunit; part of the 5S rRNA/L5/L18/L25 subcomplex. Contacts the 5S rRNA and the P site tRNA. Forms a bridge to the 30S subunit in the 70S ribosome.

This is one of the proteins that bind and probably mediate the attachment of the 5S RNA into the large ribosomal subunit, where it forms part of the central protuberance. In the 70S ribosome it contacts protein S13 of the 30S subunit (bridge B1b), connecting the 2 subunits; this bridge is implicated in subunit movement. Contacts the P site tRNA; the 5S rRNA and some of its associated proteins might help stabilize positioning of ribosome-bound tRNAs. This Rickettsia bellii (strain OSU 85-389) protein is Large ribosomal subunit protein uL5.